The primary structure comprises 192 residues: Der GTPase-activating protein YihI (192 aa).

A disordered region spans residues 1-80 (MSRTKKTRRI…KAAVKEVKDP (80 aa)). Basic and acidic residues-rich tracts occupy residues 9–25 (RITD…KPEQ), 37–48 (TRYELDAKAREE), and 65–80 (DPAE…VKDP).

The protein belongs to the YihI family. Interacts with Der.

A GTPase-activating protein (GAP) that modifies Der/EngA GTPase function. May play a role in ribosome biogenesis. This chain is Der GTPase-activating protein YihI, found in Actinobacillus pleuropneumoniae serotype 7 (strain AP76).